A 605-amino-acid polypeptide reads, in one-letter code: Alpha-1,3-galactosidase B (605 aa).

Positions 1–19 are cleaved as a signal peptide; that stretch reads MKRIIFNFCFVWLAVSAFA. PbH1 repeat units lie at residues 428–450, 451–473, and 484–538; these read CPEV…LFST, PLKT…LLCG, and CRNV…VIED.

It belongs to the glycosyl hydrolase 110 family. B subfamily.

The catalysed reaction is Hydrolysis of terminal, non-reducing branched (1-&gt;3)-alpha-D-galactosidic residues, producing free D-galactose.. It carries out the reaction Hydrolysis of terminal, non-reducing linear (1-&gt;3)-alpha-D-galactosidic residues, producing free D-galactose.. It catalyses the reaction Hydrolysis of terminal, non-reducing alpha-D-galactose residues in alpha-D-galactosides, including galactose oligosaccharides, galactomannans and galactolipids.. In terms of biological role, alpha-galactosidase. Removes both branched alpha-1,3-linked galactose residues of blood group B antigens and linear alpha-1,3-linked galactose structures. The sequence is that of Alpha-1,3-galactosidase B (glaB2) from Phocaeicola vulgatus (strain ATCC 8482 / DSM 1447 / JCM 5826 / CCUG 4940 / NBRC 14291 / NCTC 11154) (Bacteroides vulgatus).